A 178-amino-acid chain; its full sequence is PRA1 family protein 2 (178 aa).

Residues 1–41 (MSEVRLPPLRALDDFVLGSARLAAPDPCDPQRWCHRVINNL) lie on the Cytoplasmic side of the membrane. Residues 42–62 (LYYQTNYLLCFGIGLALAGYV) traverse the membrane as a helical segment. The Extracellular portion of the chain corresponds to 63-64 (RP). A helical transmembrane segment spans residues 65-85 (LHTLLSALVVAVALGVLVWAA). The Cytoplasmic portion of the chain corresponds to 86 to 96 (ETRAAVRRCRR). The chain crosses the membrane as a helical span at residues 97–119 (SHPAACLAAVLAVGLLVLWVAGG). Residues 120–122 (ACT) are Extracellular-facing. The chain crosses the membrane as a helical span at residues 123-140 (FLFSIAGPVLLILVHASL). At 141–178 (RLRNLKNKIENKIESIGLKRTPMGLLLEALGQEQEAGS) the chain is on the cytoplasmic side.

Belongs to the PRA1 family. As to quaternary structure, interacts with CCR5 and GDE1. As to expression, strong expression in the brain, small intestine, lung, spleen, and pancreas as well as in tumor tissues of the breast, colon, lung and ovary, with a weaker expression in normal tissues of the same patient. High expression in neuroblastic tumors. Strongly expressed in Purkinje cells and more moderately in cells of the molecular and the granular layers in the cerebellum. Detected in neuronal cells, but not in non-neuronal cells in the cerebral cortex, hippocampus, and lateral ventricles.

It is found in the endosome membrane. Its function is as follows. May be involved in ER/Golgi transport and vesicular traffic. Plays a proapoptotic role in cerulenin-induced neuroblastoma apoptosis. The sequence is that of PRA1 family protein 2 (PRAF2) from Homo sapiens (Human).